The following is a 190-amino-acid chain: MIIITDTAQKYLTTLLAKQKSGTQIRVLVLNPGTPIAECSLSYCPIDTVTKKDIKLEFDQFCVYVDQLSTSYLEDALIDCVLDELGTQLIIQAPHLIEKIDSNTPLLERVNQIILSCINPQLANHGGKVTLITITEDMFAIIQFSGGCNGCSMVSYTLKEHIEKKLLQLFPELKGVKDLTQHNHSQYSFY.

[4Fe-4S] cluster is bound by residues Cys148 and Cys151.

Belongs to the NfuA family. Homodimer. Requires [4Fe-4S] cluster as cofactor.

Involved in iron-sulfur cluster biogenesis. Binds a 4Fe-4S cluster, can transfer this cluster to apoproteins, and thereby intervenes in the maturation of Fe/S proteins. Could also act as a scaffold/chaperone for damaged Fe/S proteins. This Baumannia cicadellinicola subsp. Homalodisca coagulata protein is Fe/S biogenesis protein NfuA.